The sequence spans 146 residues: MKIKLEIKRLPHGANLPFPSYASEGAAGMDVVSAEDVILQPMQRYPVKTGFAVAIPNGYEIQVRARSGLALKHGIACPNAPGTIDSDYRGEVKILLINLGSEAFEIKRGDRIAQLILASVTQAVFCEVTDLDDTQRGHNGFGSTGI.

Residues 66–68 (RSG), asparagine 79, 83–85 (TID), and lysine 93 contribute to the substrate site.

Belongs to the dUTPase family. Mg(2+) is required as a cofactor.

It catalyses the reaction dUTP + H2O = dUMP + diphosphate + H(+). It participates in pyrimidine metabolism; dUMP biosynthesis; dUMP from dCTP (dUTP route): step 2/2. Its function is as follows. This enzyme is involved in nucleotide metabolism: it produces dUMP, the immediate precursor of thymidine nucleotides and it decreases the intracellular concentration of dUTP so that uracil cannot be incorporated into DNA. In Zymomonas mobilis subsp. mobilis (strain ATCC 31821 / ZM4 / CP4), this protein is Deoxyuridine 5'-triphosphate nucleotidohydrolase.